Consider the following 194-residue polypeptide: Ras-related protein Rab-22A (194 aa).

12–20 contacts GTP; that stretch reads GDTGVGKSS. The Effector region signature appears at 34-42; it reads INPTIGASF. Residues 60–64, 118–121, and 148–150 each bind GTP; these read DTAGQ, NKCD, and SAK. The disordered stretch occupies residues 174–194; sequence PSGGKGFKLRRQPSEPKRSCC. Residues 185-194 are compositionally biased toward basic and acidic residues; sequence QPSEPKRSCC. 2 S-geranylgeranyl cysteine lipidation sites follow: C193 and C194.

Belongs to the small GTPase superfamily. Rab family. Interacts directly with ZFYVE20. Binds EEA1. Interacts (in its GTP-bound form) with RABGEF1. Interacts (in its GTP-bound form) with RINL.

The protein resides in the endosome membrane. It is found in the cell membrane. It localises to the early endosome. Its subcellular location is the late endosome. The protein localises to the cell projection. The protein resides in the ruffle. It is found in the cytoplasmic vesicle. It localises to the phagosome. Its subcellular location is the phagosome membrane. Functionally, plays a role in endocytosis and intracellular protein transport. Mediates trafficking of TF from early endosomes to recycling endosomes. Required for NGF-mediated endocytosis of NTRK1, and subsequent neurite outgrowth. Binds GTP and GDP and has low GTPase activity. Alternates between a GTP-bound active form and a GDP-bound inactive form. The protein is Ras-related protein Rab-22A (RAB22A) of Homo sapiens (Human).